Here is a 317-residue protein sequence, read N- to C-terminus: Peroxidase 64 (317 aa).

The signal sequence occupies residues 1-22 (MNAHMLNLLVIVIFVVSFDVQA). Intrachain disulfides connect Cys32/Cys111, Cys65/Cys70, Cys117/Cys313, and Cys195/Cys227. The active-site Proton acceptor is the His63. Ca(2+) is bound by residues Asp64, Val67, Gly69, Asp71, and Ser73. Residue Pro158 coordinates substrate. Asn163 carries an N-linked (GlcNAc...) asparagine glycan. Residue His188 participates in heme b binding. Thr189 lines the Ca(2+) pocket. Positions 241, 243, and 248 each coordinate Ca(2+).

The protein belongs to the peroxidase family. Classical plant (class III) peroxidase subfamily. The cofactor is heme b. Requires Ca(2+) as cofactor. In terms of tissue distribution, expressed in the whole plant, but preferentially in roots.

Its subcellular location is the secreted. The catalysed reaction is 2 a phenolic donor + H2O2 = 2 a phenolic radical donor + 2 H2O. Functionally, removal of H(2)O(2), oxidation of toxic reductants, biosynthesis and degradation of lignin, suberization, auxin catabolism, response to environmental stresses such as wounding, pathogen attack and oxidative stress. These functions might be dependent on each isozyme/isoform in each plant tissue. In Arabidopsis thaliana (Mouse-ear cress), this protein is Peroxidase 64 (PER64).